The following is a 386-amino-acid chain: Mannitol-1-phosphate 5-dehydrogenase (386 aa).

Residue 4–15 coordinates NAD(+); the sequence is ALHFGAGNIGRG.

The protein belongs to the mannitol dehydrogenase family.

It catalyses the reaction D-mannitol 1-phosphate + NAD(+) = beta-D-fructose 6-phosphate + NADH + H(+). This is Mannitol-1-phosphate 5-dehydrogenase from Caldanaerobacter subterraneus subsp. tengcongensis (strain DSM 15242 / JCM 11007 / NBRC 100824 / MB4) (Thermoanaerobacter tengcongensis).